A 271-amino-acid polypeptide reads, in one-letter code: 2-aminophenol 1,6-dioxygenase subunit alpha (271 aa).

Belongs to the LigB/MhpB extradiol dioxygenase family. In terms of assembly, the APD complex is a heterotetramer of 2 alpha (CnbCa) and 2 beta (CnbCb) subunits.

The protein operates within xenobiotic degradation; nitrobenzene degradation. It functions in the pathway xenobiotic degradation; 4-chloronitrobenzene degradation. Functionally, component of the 2-aminophenol 1,6-dioxygenase (APD) complex that catalyzes the ring fission of 2-aminophenol to produce 2-aminomuconic semialdehyde. CnbCa may have a role in the stability of the complex. The complex is also active on other substrates such as 2-amino-5-chlorophenol (68% activity), protocatechuate (33% activity) and catechol (5% activity). Both 2-aminophenol and 2-amino-5-cholorophenol are likely native substrates for this dioxygenase which is involved in the reductive degradation pathway of both nitrobenzene (NB) and 4-chloronitrobenzene (4-CNB), allowing C.testosteroni strain CNB-1 to grow on these compounds as sole source of carbon, nitrogen, and energy. The polypeptide is 2-aminophenol 1,6-dioxygenase subunit alpha (Comamonas testosteroni (Pseudomonas testosteroni)).